The sequence spans 5146 residues: SCO-spondin (5146 aa).

An N-terminal signal peptide occupies residues methionine 1–glycine 17. In terms of domain architecture, EMI spans arginine 18–histidine 94. N-linked (GlcNAc...) asparagine glycosylation is found at asparagine 80, asparagine 122, and asparagine 153. Residues alanine 185 to leucine 356 form the VWFD 1 domain. Cystine bridges form between cysteine 187–cysteine 317, cysteine 209–cysteine 355, and cysteine 231–cysteine 237. A glycan (N-linked (GlcNAc...) asparagine) is linked at asparagine 255. Positions cysteine 464–cysteine 519 constitute a TIL 1 domain. Positions alanine 557 to serine 730 constitute a VWFD 2 domain. 2 disulfides stabilise this stretch: cysteine 559–cysteine 692 and cysteine 583–cysteine 729. Asparagine 814 is a glycosylation site (N-linked (GlcNAc...) asparagine). Residues cysteine 822–cysteine 875 form the TIL 2 domain. N-linked (GlcNAc...) asparagine glycosylation is present at asparagine 906. One can recognise a VWFD 3 domain in the interval glycine 1008–proline 1178. Cystine bridges form between cysteine 1010–cysteine 1142, cysteine 1032–cysteine 1177, and cysteine 1053–cysteine 1060. In terms of domain architecture, TIL 3 spans cysteine 1271–cysteine 1327. Asparagine 1349 carries N-linked (GlcNAc...) asparagine glycosylation. 6 consecutive LDL-receptor class A domains span residues glycine 1372–alanine 1409, valine 1412–cysteine 1447, proline 1448–leucine 1484, aspartate 1488–proline 1526, proline 1561–aspartate 1597, and proline 1599–glutamate 1638. Intrachain disulfides connect cysteine 1373/cysteine 1386, cysteine 1380/cysteine 1399, cysteine 1393/cysteine 1408, cysteine 1413/cysteine 1425, cysteine 1420/cysteine 1438, cysteine 1432/cysteine 1447, cysteine 1449/cysteine 1461, cysteine 1456/cysteine 1474, cysteine 1468/cysteine 1483, cysteine 1489/cysteine 1501, cysteine 1496/cysteine 1514, cysteine 1508/cysteine 1525, cysteine 1562/cysteine 1574, cysteine 1569/cysteine 1587, cysteine 1581/cysteine 1596, cysteine 1600/cysteine 1613, cysteine 1607/cysteine 1626, and cysteine 1620/cysteine 1637. Asparagine 1647 carries an N-linked (GlcNAc...) asparagine glycan. Residues proline 1652 to glycine 1690 form the LDL-receptor class A 7 domain. TSP type-1 domains follow at residues cysteine 1691–proline 1745 and aspartate 1747–proline 1805. Disulfide bonds link cysteine 1703-cysteine 1739, cysteine 1707-cysteine 1744, and cysteine 1718-cysteine 1729. Asparagine 1806 carries N-linked (GlcNAc...) asparagine glycosylation. A TIL 4 domain is found at cysteine 1809–cysteine 1865. EGF-like domains are found at residues cysteine 1821 to valine 1860 and tryptophan 1861 to glutamine 1898. Positions asparagine 1906–glutamate 1962 constitute a TSP type-1 3 domain. Disulfide bonds link cysteine 1907/cysteine 1946, cysteine 1918/cysteine 1922, and cysteine 1956/cysteine 1961. Residues glutamate 1962–valine 2022 form the VWFC 1 domain. 2 N-linked (GlcNAc...) asparagine glycosylation sites follow: asparagine 2027 and asparagine 2127. 4 disulfide bridges follow: cysteine 2062/cysteine 2220, cysteine 2226/cysteine 2238, cysteine 2233/cysteine 2251, and cysteine 2245/cysteine 2260. An F5/8 type C domain is found at cysteine 2062–cysteine 2220. The LDL-receptor class A 8 domain occupies leucine 2225–valine 2261. Positions threonine 2262 to alanine 2346 are disordered. Polar residues-rich tracts occupy residues threonine 2273–proline 2284 and glycine 2331–glutamate 2343. 2 consecutive LDL-receptor class A domains span residues glutamine 2382–alanine 2418 and leucine 2442–valine 2478. 12 cysteine pairs are disulfide-bonded: cysteine 2383-cysteine 2395, cysteine 2390-cysteine 2408, cysteine 2402-cysteine 2417, cysteine 2443-cysteine 2455, cysteine 2450-cysteine 2468, cysteine 2462-cysteine 2477, cysteine 2480-cysteine 2516, cysteine 2491-cysteine 2495, cysteine 2526-cysteine 2531, cysteine 2546-cysteine 2583, cysteine 2550-cysteine 2588, and cysteine 2561-cysteine 2573. 2 TSP type-1 domains span residues aspartate 2479–proline 2532 and alanine 2534–alanine 2589. Residues valine 2611–cysteine 2654 enclose the TIL 5 domain. N-linked (GlcNAc...) asparagine glycosylation is found at asparagine 2624 and asparagine 2673. TSP type-1 domains are found at residues proline 2694–glycine 2748, valine 2751–leucine 2807, and leucine 2809–threonine 2862. Intrachain disulfides connect cysteine 2695–cysteine 2733, cysteine 2706–cysteine 2710, cysteine 2743–cysteine 2747, cysteine 2763–cysteine 2801, cysteine 2767–cysteine 2806, cysteine 2783–cysteine 2791, cysteine 2821–cysteine 2856, cysteine 2825–cysteine 2861, and cysteine 2836–cysteine 2846. N-linked (GlcNAc...) asparagine glycans are attached at residues asparagine 2915 and asparagine 2946. 2 consecutive TSP type-1 domains span residues alanine 2964–glycine 3019 and glycine 3020–proline 3071. Cystine bridges form between cysteine 2965–cysteine 3003, cysteine 2976–cysteine 2980, and cysteine 3013–cysteine 3018. An N-linked (GlcNAc...) asparagine glycan is attached at asparagine 3041. A TIL 6 domain is found at cysteine 3070 to cysteine 3122. 2 N-linked (GlcNAc...) asparagine glycosylation sites follow: asparagine 3143 and asparagine 3153. 2 TSP type-1 domains span residues glutamine 3163–aspartate 3230 and alanine 3232–proline 3287. Intrachain disulfides connect cysteine 3175/cysteine 3224, cysteine 3179/cysteine 3229, cysteine 3190/cysteine 3214, cysteine 3244/cysteine 3281, cysteine 3248/cysteine 3286, and cysteine 3259/cysteine 3271. An N-linked (GlcNAc...) asparagine glycan is attached at asparagine 3290. A TIL 7 domain is found at glutamate 3295–cysteine 3345. 2 TSP type-1 domains span residues proline 3388–proline 3450 and aspartate 3452–threonine 3507. Cystine bridges form between cysteine 3400/cysteine 3443, cysteine 3404/cysteine 3449, cysteine 3415/cysteine 3427, cysteine 3464/cysteine 3499, cysteine 3467/cysteine 3506, and cysteine 3477/cysteine 3489. 3 N-linked (GlcNAc...) asparagine glycosylation sites follow: asparagine 3502, asparagine 3580, and asparagine 3607. The region spanning leucine 3626–arginine 3674 is the TSP type-1 15 domain. 3 disulfides stabilise this stretch: cysteine 3638-cysteine 3668, cysteine 3642-cysteine 3673, and cysteine 3653-cysteine 3658. A glycan (N-linked (GlcNAc...) asparagine) is linked at asparagine 3783. TSP type-1 domains lie at alanine 3802–proline 3858, proline 3872–threonine 3924, asparagine 3938–proline 3994, and proline 3996–glutamate 4051. 3 disulfide bridges follow: cysteine 3814–cysteine 3852, cysteine 3818–cysteine 3857, and cysteine 3830–cysteine 3842. 2 N-linked (GlcNAc...) asparagine glycosylation sites follow: asparagine 3906 and asparagine 3938. 6 disulfide bridges follow: cysteine 3939/cysteine 3975, cysteine 3950/cysteine 3954, cysteine 3988/cysteine 3993, cysteine 4008/cysteine 4045, cysteine 4012/cysteine 4050, and cysteine 4023/cysteine 4035. A TIL 8 domain is found at cysteine 4054–cysteine 4109. Residues glycine 4101–glycine 4168 enclose the VWFC 2 domain. N-linked (GlcNAc...) asparagine glycosylation is present at asparagine 4131. 4 consecutive TSP type-1 domains span residues histidine 4151 to proline 4204, leucine 4245 to proline 4300, leucine 4302 to leucine 4358, and glutamate 4360 to serine 4414. 6 disulfides stabilise this stretch: cysteine 4152–cysteine 4188, cysteine 4163–cysteine 4167, cysteine 4198–cysteine 4203, cysteine 4257–cysteine 4294, cysteine 4261–cysteine 4299, and cysteine 4272–cysteine 4284. The N-linked (GlcNAc...) asparagine glycan is linked to asparagine 4341. 3 cysteine pairs are disulfide-bonded: cysteine 4361-cysteine 4398, cysteine 4372-cysteine 4374, and cysteine 4408-cysteine 4413. Residue asparagine 4412 is glycosylated (N-linked (GlcNAc...) asparagine). In terms of domain architecture, TIL 9 spans cysteine 4418–cysteine 4473. The region spanning leucine 4610 to proline 4661 is the TSP type-1 24 domain. 3 disulfide bridges follow: cysteine 4611–cysteine 4645, cysteine 4622–cysteine 4626, and cysteine 4655–cysteine 4660. Positions aspartate 4675–cysteine 4721 constitute a TIL 10 domain. Residues asparagine 4729, asparagine 4746, asparagine 4751, and asparagine 4772 are each glycosylated (N-linked (GlcNAc...) asparagine). The 54-residue stretch at cysteine 4761–proline 4814 folds into the TSP type-1 25 domain. 3 disulfides stabilise this stretch: cysteine 4773–cysteine 4808, cysteine 4777–cysteine 4813, and cysteine 4788–cysteine 4797. A TIL 11 domain is found at cysteine 4816–cysteine 4870. Asparagine 4861, asparagine 4901, asparagine 4947, and asparagine 4954 each carry an N-linked (GlcNAc...) asparagine glycan. Positions cysteine 4983 to arginine 5041 constitute a VWFC 3 domain. 4 disulfide bridges follow: cysteine 5052–cysteine 5100, cysteine 5066–cysteine 5117, cysteine 5076–cysteine 5133, and cysteine 5080–cysteine 5135. The 88-residue stretch at cysteine 5052–glutamine 5139 folds into the CTCK domain. Residue asparagine 5060 is glycosylated (N-linked (GlcNAc...) asparagine).

This sequence belongs to the thrombospondin family. As to expression, subcommissural organ. Located at the boundary of the diencephalon and mesencephalon beneath the posterior commissure at the point where the axons cross the midline.

Its subcellular location is the secreted. It is found in the extracellular space. Its function is as follows. Involved in the modulation of neuronal aggregation. May be involved in developmental events during the formation of the central nervous system. This chain is SCO-spondin (SSPO), found in Bos taurus (Bovine).